Consider the following 641-residue polypeptide: PWWP domain-containing DNA repair factor 3A (641 aa).

The disordered stretch occupies residues 98 to 329 (LNERQGSSSR…LEEDEDDEEP (232 aa)). S156 carries the phosphoserine modification. Composition is skewed to basic and acidic residues over residues 194 to 203 (QDREASRKQQ) and 295 to 307 (ADTR…RPLS). S307 bears the Phosphoserine mark. Positions 343–404 (VGMLVWHKYQ…KHFDCKEKQA (62 aa)) constitute a PWWP domain. Residues 463–486 (TRFPQLSGGDPEEPVAGSPQGRRP) are disordered.

It belongs to the PWWP3A family. Interacts with TP53BP1 (via BRCT domain); the interaction is not dependent on its phosphorylation status. Binds nucleosomes. Interacts with trimethylated 'Lys-36' of histone H3 (H3K36me3) (in vitro).

It localises to the nucleus. Functionally, involved in the DNA damage response pathway by contributing to the maintenance of chromatin architecture. Recruited to the vicinity of DNA breaks by TP53BP1 and plays an accessory role to facilitate damage-induced chromatin changes and promoting chromatin relaxation. Required for efficient DNA repair and cell survival following DNA damage. The sequence is that of PWWP domain-containing DNA repair factor 3A (PWWP3A) from Bos taurus (Bovine).